Reading from the N-terminus, the 989-residue chain is Atos homolog protein A (989 aa).

Residues T24–T32 are transactivation domain 1 (TAD1). Disordered stretches follow at residues G244–G295, P393–T477, Q525–Q639, and E656–N686. Residues R254–H270 show a composition bias toward low complexity. Residues F397–T412 are compositionally biased toward polar residues. Composition is skewed to basic and acidic residues over residues Q413–D423 and T460–T471. 2 stretches are compositionally biased toward polar residues: residues Q525–S544 and T600–T638. Over residues E656 to E675 the composition is skewed to basic and acidic residues. A compositionally biased stretch (polar residues) spans P676–N686. The tract at residues L792–Y849 is required for macropage invasion. The interval F876–K884 is transactivation domain 2 (TAD2).

Belongs to the ATOS family.

The protein localises to the nucleus. Transcription regulator that syncronizes transcriptional and translational programs to promote macrophage invasion of tissues. This Danio rerio (Zebrafish) protein is Atos homolog protein A (atosa).